The primary structure comprises 257 residues: 1-(5-phosphoribosyl)-5-[(5-phosphoribosylamino)methylideneamino] imidazole-4-carboxamide isomerase (257 aa).

Catalysis depends on aspartate 8, which acts as the Proton acceptor. Aspartate 129 functions as the Proton donor in the catalytic mechanism.

The protein belongs to the HisA/HisF family.

Its subcellular location is the cytoplasm. It carries out the reaction 1-(5-phospho-beta-D-ribosyl)-5-[(5-phospho-beta-D-ribosylamino)methylideneamino]imidazole-4-carboxamide = 5-[(5-phospho-1-deoxy-D-ribulos-1-ylimino)methylamino]-1-(5-phospho-beta-D-ribosyl)imidazole-4-carboxamide. The protein operates within amino-acid biosynthesis; L-histidine biosynthesis; L-histidine from 5-phospho-alpha-D-ribose 1-diphosphate: step 4/9. The protein is 1-(5-phosphoribosyl)-5-[(5-phosphoribosylamino)methylideneamino] imidazole-4-carboxamide isomerase of Trichodesmium erythraeum (strain IMS101).